We begin with the raw amino-acid sequence, 195 residues long: MSTMIDIRRLQTVNELAREGASTVAENMSQLTGVETQMQITKINVIDVEDLGAHLGAAKQVGVSVPLKEQPYGSVLVLFDDESARRVAGTMMGGIESEGGGYSDMERSAIREVGNIMTSGFIDGWANVLGRTIDISTPQLIRASGEDIASHCVDPGEHEIAMVFDAELHAPDANVEAKIYSFPDIEAFVSMINSI.

Belongs to the CheC family.

Catalyzes the dephosphorylation of CheY-P. The protein is Putative CheY-P phosphatase CheC1 (cheC1) of Halobacterium salinarum (strain ATCC 29341 / DSM 671 / R1).